The chain runs to 2477 residues: Spectrin alpha chain, non-erythrocytic 1 (2477 aa).

Residues 1–14 are N-terminal domain; it reads MDPSGVKVLETAED. Spectrin repeat units follow at residues 45-146, 150-251, 256-358, 361-465, 468-570, 574-676, 679-781, 785-888, 891-969, and 1096-1162; these read RFQF…VKLL, KLVQ…QGKL, EVQR…ARLN, YRLQ…QYEQ, DLQL…AQLA, HLQQ…KLRE, QQQQ…QKLA, RLQQ…DLED, QAQQ…ETGK, and LFRE…SEGL. The SH3 domain occupies 967–1026; that stretch reads TGKELVLALYDYQEKSPREVTMKKGDILTLLNSTNKDWWKVEVNDRQGFVPAAYVKKLDP. A Phosphotyrosine modification is found at Y1176. Spectrin repeat units follow at residues 1234-1336, 1339-1442, 1446-1549, 1552-1661, 1664-1767, 1769-1873, 1876-1979, 1983-2086, 2097-2199, and 2211-2315; these read EVQR…EKLG, HDLQ…MMLD, ELQL…KLGE, TLQQ…KLKE, KQQN…KLNE, HRLH…RLEE, EYQQ…KLDE, FLQF…KLLE, LFLT…LELQ, and LRQE…NLEQ. The C-terminal domain stretch occupies residues 2257 to 2477; it reads HQEIRAMRSQ…IEFTRSLFVN (221 aa). EF-hand domains are found at residues 2328–2363, 2371–2406, and 2409–2444; these read EALK…LGYD, EPDP…RETE, and KSSE…EQAD. D2341, D2343, S2345, R2347, E2352, D2384, N2386, D2388, H2390, and E2395 together coordinate Ca(2+).

Belongs to the spectrin family. In terms of assembly, like erythrocyte spectrin, the spectrin-like proteins are capable of forming dimers which can further associate to tetramers. Interacts with ACP1. In terms of processing, phosphorylation of Tyr-1176 decreases sensitivity to cleavage by calpain in vitro.

Its subcellular location is the cytoplasm. The protein resides in the cytoskeleton. It localises to the cell cortex. Functionally, morphologically, spectrin-like proteins appear to be related to spectrin, showing a flexible rod-like structure. They can bind actin but seem to differ in their calmodulin-binding activity. In nonerythroid tissues, spectrins, in association with some other proteins, may play an important role in membrane organization. In Gallus gallus (Chicken), this protein is Spectrin alpha chain, non-erythrocytic 1 (SPTAN1).